Here is a 243-residue protein sequence, read N- to C-terminus: UTP--glucose-1-phosphate uridylyltransferase AglF (243 aa).

Belongs to the UDPGP type 2 family.

The catalysed reaction is alpha-D-glucose 1-phosphate + UTP + H(+) = UDP-alpha-D-glucose + diphosphate. It functions in the pathway cell surface structure biogenesis; S-layer biogenesis. In terms of biological role, involved in the assembly of a N-linked pentasaccharide that decorates the S-layer glycoprotein and flagellins. Involved in the biosynthesis of the hexuronic acid found at position 3 of the pentasaccharide. The protein is UTP--glucose-1-phosphate uridylyltransferase AglF (aglF) of Haloferax volcanii (strain ATCC 29605 / DSM 3757 / JCM 8879 / NBRC 14742 / NCIMB 2012 / VKM B-1768 / DS2) (Halobacterium volcanii).